Consider the following 448-residue polypeptide: Glucan 1,3-beta-glucosidase I/II (448 aa).

Positions 1–19 are cleaved as a signal peptide; sequence MLSLKTLLCTLLTVSSVLA. The propeptide occupies 20–40; the sequence is TPVPARDPSSIQFVHEENKKR. N-linked (GlcNAc...) asparagine glycosylation occurs at Asn165. Glu232 functions as the Proton donor in the catalytic mechanism. Asn325 carries N-linked (GlcNAc...) asparagine glycosylation. Catalysis depends on Glu334, which acts as the Nucleophile.

The protein belongs to the glycosyl hydrolase 5 (cellulase A) family.

Its subcellular location is the secreted. The protein resides in the cell wall. The catalysed reaction is Successive hydrolysis of beta-D-glucose units from the non-reducing ends of (1-&gt;3)-beta-D-glucans, releasing alpha-glucose.. Glucanases possibly play a role in cell expansion during growth, in cell-cell fusion during mating, and in spore release during sporulation. This enzyme hydrolyzes both 1,3-beta- and 1,6-beta-linkages and even has beta-glucosidase activity. It could also function biosynthetically as a transglycosylase. This chain is Glucan 1,3-beta-glucosidase I/II (EXG1), found in Saccharomyces cerevisiae (strain ATCC 204508 / S288c) (Baker's yeast).